A 349-amino-acid polypeptide reads, in one-letter code: MAWSLGTLRVTSHPYFRLLIPFLTVLLQCYGVWAFCHQFCYLQLYQRRNAKGACIGLIIVVLSLTFLIWYIWALMLVLGPGRQPTIPPFKIIPDSEIRTVSSESAVPDNSIAPPDIYPCDERGYPIWCSNCQSLKMSRTHHSTKVGYCVPRFDHYCVWIGTVLGRLNYKLFVQFTFYLDLVVLILMISIATQMRQMKGSANGNVYAVFALACCALLMAGPLFLTHIYYMCYNRTSIEIIEVNNKAKASRKFFCIYNPCDGYRYVIQFCPGENQDFWNKGNILTNLKEFLGPNYLSWFIPSILTHKQSYGKSSANYYDLIGDCNEVMSEKFQKYMIDKIERKEYVTRLVV.

A run of 2 helical transmembrane segments spans residues 19-39 (LIPF…CHQF) and 57-77 (LIIV…LMLV). The DHHC domain maps to 126-176 (IWCSNCQSLKMSRTHHSTKVGYCVPRFDHYCVWIGTVLGRLNYKLFVQFTF). Cys-156 functions as the S-palmitoyl cysteine intermediate in the catalytic mechanism. The next 2 helical transmembrane spans lie at 170-190 (LFVQ…ISIA) and 204-224 (VYAV…LFLT).

The protein belongs to the DHHC palmitoyltransferase family. PFA5 subfamily.

Its subcellular location is the membrane. The enzyme catalyses L-cysteinyl-[protein] + hexadecanoyl-CoA = S-hexadecanoyl-L-cysteinyl-[protein] + CoA. This Kluyveromyces lactis (strain ATCC 8585 / CBS 2359 / DSM 70799 / NBRC 1267 / NRRL Y-1140 / WM37) (Yeast) protein is Palmitoyltransferase PFA5 (PFA5).